The chain runs to 828 residues: Periplasmic nitrate reductase (828 aa).

A signal peptide (tat-type signal) is located at residues 1-31; it reads MKLSRRSFMKANAVAAAAAAAGLSVPGVARA. The 4Fe-4S Mo/W bis-MGD-type domain maps to 39–95; that stretch reads IKWDKAPCRFCGTGCGVLVGTQQGRVVACQGDPDAPVNRGLNCIKGYFLPKIMYGKD. [4Fe-4S] cluster contacts are provided by cysteine 46, cysteine 49, cysteine 53, and cysteine 81. Residues lysine 83, glutamine 150, asparagine 175, cysteine 179, 212-219, 243-247, 262-264, methionine 372, glutamine 376, asparagine 482, 508-509, lysine 531, aspartate 558, and 718-727 each bind Mo-bis(molybdopterin guanine dinucleotide); these read WGANMAEM, STYQH, QSD, SD, and TGRVLEHWHT. Residue phenylalanine 794 coordinates substrate. Mo-bis(molybdopterin guanine dinucleotide)-binding residues include asparagine 802 and lysine 819.

It belongs to the prokaryotic molybdopterin-containing oxidoreductase family. NasA/NapA/NarB subfamily. As to quaternary structure, component of the periplasmic nitrate reductase NapAB complex composed of NapA and NapB. It depends on [4Fe-4S] cluster as a cofactor. Mo-bis(molybdopterin guanine dinucleotide) serves as cofactor. Predicted to be exported by the Tat system. The position of the signal peptide cleavage has not been experimentally proven.

The protein resides in the periplasm. It catalyses the reaction 2 Fe(II)-[cytochrome] + nitrate + 2 H(+) = 2 Fe(III)-[cytochrome] + nitrite + H2O. Functionally, catalytic subunit of the periplasmic nitrate reductase complex NapAB. Receives electrons from NapB and catalyzes the reduction of nitrate to nitrite. The polypeptide is Periplasmic nitrate reductase (Escherichia coli O7:K1 (strain IAI39 / ExPEC)).